We begin with the raw amino-acid sequence, 105 residues long: Met repressor (105 aa).

It belongs to the MetJ family. As to quaternary structure, homodimer.

Its subcellular location is the cytoplasm. Its function is as follows. This regulatory protein, when combined with SAM (S-adenosylmethionine) represses the expression of the methionine regulon and of enzymes involved in SAM synthesis. This chain is Met repressor, found in Klebsiella pneumoniae subsp. pneumoniae (strain ATCC 700721 / MGH 78578).